The sequence spans 155 residues: Small ribosomal subunit protein uS13 (155 aa).

Basic residues predominate over residues 135 to 145 (QHTKTTGRRGR). Positions 135 to 155 (QHTKTTGRRGRTVGVSRTKGA) are disordered. A compositionally biased stretch (low complexity) spans 146-155 (TVGVSRTKGA).

Belongs to the universal ribosomal protein uS13 family. As to quaternary structure, component of the small ribosomal subunit.

It is found in the cytoplasm. Component of the small ribosomal subunit. The ribosome is a large ribonucleoprotein complex responsible for the synthesis of proteins in the cell. This Entamoeba histolytica (strain ATCC 30459 / HM-1:IMSS / ABRM) protein is Small ribosomal subunit protein uS13 (RPS18).